A 473-amino-acid polypeptide reads, in one-letter code: Fumarate hydratase class II (473 aa).

Substrate is bound by residues 104 to 106 (SGT), 128 to 131 (HPND), 138 to 140 (SSN), and T186. H187 (proton donor/acceptor) is an active-site residue. The active site involves S318. Substrate contacts are provided by residues S319 and 324–326 (KVN).

The protein belongs to the class-II fumarase/aspartase family. Fumarase subfamily. As to quaternary structure, homotetramer.

The protein localises to the cytoplasm. It carries out the reaction (S)-malate = fumarate + H2O. It functions in the pathway carbohydrate metabolism; tricarboxylic acid cycle; (S)-malate from fumarate: step 1/1. In terms of biological role, involved in the TCA cycle. Catalyzes the stereospecific interconversion of fumarate to L-malate. In Corynebacterium glutamicum (strain ATCC 13032 / DSM 20300 / JCM 1318 / BCRC 11384 / CCUG 27702 / LMG 3730 / NBRC 12168 / NCIMB 10025 / NRRL B-2784 / 534), this protein is Fumarate hydratase class II.